A 471-amino-acid polypeptide reads, in one-letter code: Apyrase 1 (471 aa).

Residues 1–21 (MTAKRAIGRHESLADKVHRHR) lie on the Cytoplasmic side of the membrane. The helical; Signal-anchor for type II membrane protein transmembrane segment at 22–42 (GLLLVISIPIVLIALVLLLMP) threads the bilayer. The Lumenal portion of the chain corresponds to 43-471 (GTSTSVSVIE…GSAIEAVSSP (429 aa)). ATP is bound at residue 72–82 (VIFDAGSSGSR). Catalysis depends on E194, which acts as the Proton acceptor. 218-228 (GVVDLGGGSVQ) is an ATP binding site. The N-linked (GlcNAc...) asparagine glycan is linked to N333.

The protein belongs to the GDA1/CD39 NTPase family. Requires Ca(2+) as cofactor. Expressed in roots, root hairs, root cap, leaves, stems, trichomes, phloem throughout the plant, guard cells, filaments of young stamens, stipules, papillae of stigmas, pollen, pollen tubes and the abscission zone of siliques.

It localises to the golgi apparatus membrane. The protein resides in the membrane. The catalysed reaction is a ribonucleoside 5'-triphosphate + 2 H2O = a ribonucleoside 5'-phosphate + 2 phosphate + 2 H(+). Functionally, catalyzes the hydrolysis of phosphoanhydride bonds of nucleoside tri- and di-phosphates. Substrate preference is ATP &gt; ADP. Functions with APY2 to reduce extracellular ATP level which is essential for pollen germination and normal plant development. Plays a role in the regulation of stomatal function by modulating extracellular ATP levels in guard cells. This Arabidopsis thaliana (Mouse-ear cress) protein is Apyrase 1 (APY1).